We begin with the raw amino-acid sequence, 341 residues long: Glycerol-3-phosphate dehydrogenase [NAD(P)+] 1 (341 aa).

Residues S11, W12, R32, R33, and K106 each contribute to the NADPH site. K106, G137, and S139 together coordinate sn-glycerol 3-phosphate. A141 is an NADPH binding site. Residues K192, D245, S255, R256, and N257 each contribute to the sn-glycerol 3-phosphate site. Catalysis depends on K192, which acts as the Proton acceptor. R256 serves as a coordination point for NADPH. NADPH contacts are provided by V280 and E282.

It belongs to the NAD-dependent glycerol-3-phosphate dehydrogenase family.

It localises to the cytoplasm. It carries out the reaction sn-glycerol 3-phosphate + NAD(+) = dihydroxyacetone phosphate + NADH + H(+). It catalyses the reaction sn-glycerol 3-phosphate + NADP(+) = dihydroxyacetone phosphate + NADPH + H(+). It participates in membrane lipid metabolism; glycerophospholipid metabolism. In terms of biological role, catalyzes the reduction of the glycolytic intermediate dihydroxyacetone phosphate (DHAP) to sn-glycerol 3-phosphate (G3P), the key precursor for phospholipid synthesis. This chain is Glycerol-3-phosphate dehydrogenase [NAD(P)+] 1, found in Salinibacter ruber (strain DSM 13855 / M31).